The primary structure comprises 194 residues: Large ribosomal subunit protein eL15 (194 aa).

The disordered stretch occupies residues 160–194 (RGLTSAGKKGRGLMYKGKGTEKVRPSVRANSKKAK).

The protein belongs to the eukaryotic ribosomal protein eL15 family.

The chain is Large ribosomal subunit protein eL15 from Methanococcus maripaludis (strain C7 / ATCC BAA-1331).